Reading from the N-terminus, the 176-residue chain is ATP-dependent protease subunit HslV (176 aa).

Residue threonine 2 is part of the active site. Na(+) is bound by residues glycine 157, cysteine 160, and threonine 163.

The protein belongs to the peptidase T1B family. HslV subfamily. As to quaternary structure, a double ring-shaped homohexamer of HslV is capped on each side by a ring-shaped HslU homohexamer. The assembly of the HslU/HslV complex is dependent on binding of ATP.

It is found in the cytoplasm. It catalyses the reaction ATP-dependent cleavage of peptide bonds with broad specificity.. Allosterically activated by HslU binding. In terms of biological role, protease subunit of a proteasome-like degradation complex believed to be a general protein degrading machinery. The chain is ATP-dependent protease subunit HslV from Pectobacterium carotovorum subsp. carotovorum (strain PC1).